The chain runs to 66 residues: Large ribosomal subunit protein bL32 (66 aa).

It belongs to the bacterial ribosomal protein bL32 family.

This chain is Large ribosomal subunit protein bL32, found in Leptospira interrogans serogroup Icterohaemorrhagiae serovar copenhageni (strain Fiocruz L1-130).